The following is a 50-amino-acid chain: Thymosin beta-4 (50 aa).

Positions 1 to 50 (MLLPATMSDKPDMAEIEKFDKSKLKKTETQEKNPLPSKETIEQEKQAGES) are disordered. Serine 8 is modified (phosphoserine). A compositionally biased stretch (basic and acidic residues) spans 9–31 (DKPDMAEIEKFDKSKLKKTETQE). The residue at position 10 (lysine 10) is an N6-acetyllysine. Lysine 18 carries the N6-acetyllysine; alternate modification. Residue lysine 18 forms a Glycyl lysine isopeptide (Lys-Gly) (interchain with G-Cter in SUMO2); alternate linkage. A Phosphothreonine modification is found at threonine 29. Lysine 32 is subject to N6-acetyllysine. The residue at position 37 (serine 37) is a Phosphoserine. Lysine 38 bears the N6-acetyllysine mark. A compositionally biased stretch (basic and acidic residues) spans 39–50 (ETIEQEKQAGES). Threonine 40 carries the phosphothreonine modification. The residue at position 45 (lysine 45) is an N6-acetyllysine.

It belongs to the thymosin beta family. Identified in a complex composed of ACTA1, COBL, GSN AND TMSB4X. Interacts with SERPINB1. AcSDKP is inactivated by ACE, which removes the dipeptide Lys-Pro from its C-terminus. As to expression, originally found in thymus but it is widely distributed in many tissues.

It is found in the cytoplasm. Its subcellular location is the cytoskeleton. Its function is as follows. Plays an important role in the organization of the cytoskeleton. Binds to and sequesters actin monomers (G actin) and therefore inhibits actin polymerization. Potent inhibitor of bone marrow derived stem cell differentiation. Acts by inhibits the entry of hematopoietic pluripotent stem cells into the S-phase. This chain is Thymosin beta-4 (Tmsb4x), found in Mus musculus (Mouse).